The following is a 1260-amino-acid chain: Methionine synthase (1260 aa).

The Hcy-binding domain occupies 13-333; that stretch reads FGIIRKILSE…DHIRAFCNAI (321 aa). Positions 255, 318, and 319 each coordinate Zn(2+). Residues 364–625 form the Pterin-binding domain; it reads FVNVGERCNV…IPKDLLKLVE (262 aa). One can recognise a B12-binding N-terminal domain in the interval 655-749; the sequence is EVEEWRNKPV…FMEEEKRLKR (95 aa). Residues Glu-699, 775-779, His-778, Ser-823, Thr-827, and Ala-879 each bind methylcob(III)alamin; that span reads GDVHD. In terms of domain architecture, B12-binding spans 766–883; that stretch reads GVVVLATVKG…VHVLDASRSV (118 aa). Residues 916–1256 enclose the AdoMet activation domain; sequence SLKDRKYTSL…LSSILSYDRL (341 aa). S-adenosyl-L-methionine-binding positions include Asp-966, Arg-1163, and 1218–1219; that span reads YF.

The protein belongs to the vitamin-B12 dependent methionine synthase family. The cofactor is methylcob(III)alamin. Zn(2+) serves as cofactor.

The catalysed reaction is (6S)-5-methyl-5,6,7,8-tetrahydrofolate + L-homocysteine = (6S)-5,6,7,8-tetrahydrofolate + L-methionine. The protein operates within amino-acid biosynthesis; L-methionine biosynthesis via de novo pathway; L-methionine from L-homocysteine (MetH route): step 1/1. Its function is as follows. Catalyzes the transfer of a methyl group from methyl-cobalamin to homocysteine, yielding enzyme-bound cob(I)alamin and methionine. Subsequently, remethylates the cofactor using methyltetrahydrofolate. The polypeptide is Methionine synthase (mtr) (Dictyostelium discoideum (Social amoeba)).